The chain runs to 360 residues: DNA polymerase IV (360 aa).

The 183-residue stretch at 9 to 191 folds into the UmuC domain; it reads IMHLDIDAFY…LNINKIPYIG (183 aa). Mg(2+)-binding residues include Asp13 and Asp108. Glu109 is an active-site residue.

The protein belongs to the DNA polymerase type-Y family. In terms of assembly, monomer. The cofactor is Mg(2+).

The protein resides in the cytoplasm. The catalysed reaction is DNA(n) + a 2'-deoxyribonucleoside 5'-triphosphate = DNA(n+1) + diphosphate. Its function is as follows. Poorly processive, error-prone DNA polymerase involved in untargeted mutagenesis. Copies undamaged DNA at stalled replication forks, which arise in vivo from mismatched or misaligned primer ends. These misaligned primers can be extended by PolIV. Exhibits no 3'-5' exonuclease (proofreading) activity. May be involved in translesional synthesis, in conjunction with the beta clamp from PolIII. This is DNA polymerase IV from Ureaplasma parvum serovar 3 (strain ATCC 27815 / 27 / NCTC 11736).